A 673-amino-acid polypeptide reads, in one-letter code: Zinc finger protein 16 (673 aa).

Basic and acidic residues predominate over residues 1–10; it reads MPSLRTRREE. A disordered region spans residues 1–42; that stretch reads MPSLRTRREEAEMELSAPGPSPWTPAPQARVSDAPAVTHPGS. The tract at residues 62-210 is necessary for transcription activation; the sequence is YQQPDCDTRT…GVPTAESPLI (149 aa). The C2H2-type 1; degenerate zinc finger occupies 209 to 231; that stretch reads LICNECGKTFRGNPDLIQRQIVH. A C2H2-type 2; degenerate zinc finger spans residues 237–259; the sequence is FMCDDCGKTFSQNSVLKNRHXSH. Lys-253 is covalently cross-linked (Glycyl lysine isopeptide (Lys-Gly) (interchain with G-Cter in SUMO2)). 7 C2H2-type zinc fingers span residues 284 to 306, 312 to 334, 340 to 362, 368 to 390, 396 to 418, 424 to 446, and 452 to 474; these read YTCTECGKAFSQNSSLKKHQKSH, YECNECGKAFRRSSNLIQHQRIH, YVCSECGKAFRRSSNLIKHHRTH, FECGECGKAFSQSAHLRKHQRVH, YECNDCGKPFSRVSNLIKHHRVH, YKCSDCGKAFSQSSSLIQHRRIH, and HVCNVCGKAFSYSSVLRKHQIIH. Residues 332–364 are required for nuclear localization; that stretch reads RIHSGEKPYVCSECGKAFRRSSNLIKHHRTHTG. The required for nuclear localization stretch occupies residues 464–494; that stretch reads SSVLRKHQIIHTGEKPYRCSVCGKAFSHSSA. Lys-478 carries the N6-acetyllysine modification. 7 consecutive C2H2-type zinc fingers follow at residues 480–502, 508–530, 536–558, 564–586, 592–614, 620–642, and 648–670; these read YRCSVCGKAFSHSSALIQHQGVH, YACHECGKTFGRSSNLILHQRVH, YECTECGKTFSQSSTLIQHQRIH, HECNQCGKAFNRSSNLIHHQKVH, YTCVECGKGFSQSSHLIQHQIIH, YKCSECGKAFSQRSVLIQHQRIH, and YDCAACGKAFSQRSKLIKHQLIH.

Belongs to the krueppel C2H2-type zinc-finger protein family. Interacts with INCA1; the interaction inhibits INCA1 activity and induces the cell cycle process.

It is found in the nucleus. Functionally, acts as a transcriptional activator. Promotes cell proliferation by facilitating the cell cycle phase transition from the S to G2/M phase. Involved in both the hemin- and phorbol myristate acetate (PMA)-induced erythroid and megakaryocytic differentiation, respectively. Also plays a role as an inhibitor of cell apoptosis. The sequence is that of Zinc finger protein 16 (ZNF16) from Pan paniscus (Pygmy chimpanzee).